Consider the following 156-residue polypeptide: Small ribosomal subunit protein uS7 (156 aa).

Belongs to the universal ribosomal protein uS7 family. As to quaternary structure, part of the 30S ribosomal subunit. Contacts proteins S9 and S11.

One of the primary rRNA binding proteins, it binds directly to 16S rRNA where it nucleates assembly of the head domain of the 30S subunit. Is located at the subunit interface close to the decoding center, probably blocks exit of the E-site tRNA. This is Small ribosomal subunit protein uS7 from Thermosynechococcus vestitus (strain NIES-2133 / IAM M-273 / BP-1).